Consider the following 246-residue polypeptide: E3 ubiquitin-protein ligase RNF182 (246 aa).

The RING-type zinc finger occupies 22 to 70 (CKICYNRYNLRQRKPKVLGCCHRVCAKCLYKLVDCGESPQCVIVCPFCR). 2 consecutive transmembrane segments (helical) span residues 184 to 204 (VFVWLLGLLYFSSLPLGIYLL) and 211 to 231 (LGVVFVSLVPSSLVILMIYGF).

Interacts with ATP6V0C.

The protein resides in the membrane. It localises to the cytoplasm. The catalysed reaction is S-ubiquitinyl-[E2 ubiquitin-conjugating enzyme]-L-cysteine + [acceptor protein]-L-lysine = [E2 ubiquitin-conjugating enzyme]-L-cysteine + N(6)-ubiquitinyl-[acceptor protein]-L-lysine.. It functions in the pathway protein modification; protein ubiquitination. Its function is as follows. E3 ubiquitin-protein ligase that mediates the ubiquitination of atp6v0c and targets it to degradation via the ubiquitin-proteasome pathway. This Xenopus laevis (African clawed frog) protein is E3 ubiquitin-protein ligase RNF182 (rnf182).